A 305-amino-acid polypeptide reads, in one-letter code: UDP-3-O-acyl-N-acetylglucosamine deacetylase (305 aa).

Zn(2+) contacts are provided by His-79, His-238, and Asp-242. Residue His-265 is the Proton donor of the active site.

It belongs to the LpxC family. The cofactor is Zn(2+).

It carries out the reaction a UDP-3-O-[(3R)-3-hydroxyacyl]-N-acetyl-alpha-D-glucosamine + H2O = a UDP-3-O-[(3R)-3-hydroxyacyl]-alpha-D-glucosamine + acetate. It functions in the pathway glycolipid biosynthesis; lipid IV(A) biosynthesis; lipid IV(A) from (3R)-3-hydroxytetradecanoyl-[acyl-carrier-protein] and UDP-N-acetyl-alpha-D-glucosamine: step 2/6. Catalyzes the hydrolysis of UDP-3-O-myristoyl-N-acetylglucosamine to form UDP-3-O-myristoylglucosamine and acetate, the committed step in lipid A biosynthesis. This Vibrio cholerae serotype O1 (strain ATCC 39541 / Classical Ogawa 395 / O395) protein is UDP-3-O-acyl-N-acetylglucosamine deacetylase.